The primary structure comprises 354 residues: MRLAVLFSGALLGLLAAQGTGNDCPHKKSATLLPSFTVTPTVTESTGTTSHRTTKSHKTTTHRTTTTGTTSHGPTTATHNPTTTSHGNVTVHPTSNSTATSQGPSTATHSPATTSHGNATVHPTSNSTATSPGFTSSAHPEPPPPSPSPSPTSKETIGDYTWTNGSQPCVHLQAQIQIRVMYTTQGGGEAWGISVLNPNKTKVQGSCEGAHPHLLLSFPYGHLSFGFMQDLQQKVVYLSYMAVEYNVSFPHAAQWTFSAQNASLRDLQAPLGQSFSCSNSSIILSPAVHLDLLSLRLQAAQLPHTGVFGQSFSCPSDRSILLPLIIGLILLGLLALVLIAFCIIRRRPSAYQAL.

The signal sequence occupies residues 1-21; it reads MRLAVLFSGALLGLLAAQGTG. The Extracellular segment spans residues 22–319; it reads NDCPHKKSAT…QSFSCPSDRS (298 aa). Residues 23–140 are mucin-like; the sequence is DCPHKKSATL…SPGFTSSAHP (118 aa). The span at 40-51 shows a compositional bias: low complexity; the sequence is PTVTESTGTTSH. The interval 40 to 162 is disordered; it reads PTVTESTGTT…SKETIGDYTW (123 aa). Residues 52–61 show a composition bias toward basic residues; that stretch reads RTTKSHKTTT. Low complexity predominate over residues 62 to 84; sequence HRTTTTGTTSHGPTTATHNPTTT. Tandem repeats lie at residues 70-99 and 100-129. Residues 70–129 form a 2 X 30 AA tandem repeats region; the sequence is TSHGPTTATHNPTTTSHGNVTVHPTSNSTATSQGPSTATHSPATTSHGNATVHPTSNSTA. The segment covering 85-102 has biased composition (polar residues); that stretch reads SHGNVTVHPTSNSTATSQ. N-linked (GlcNAc...) asparagine glycosylation is found at Asn-88 and Asn-96. Low complexity predominate over residues 103-117; sequence GPSTATHSPATTSHG. N-linked (GlcNAc...) asparagine glycans are attached at residues Asn-118 and Asn-126. A compositionally biased stretch (polar residues) spans 121 to 135; that stretch reads VHPTSNSTATSPGFT. A compositionally biased stretch (pro residues) spans 140–150; that stretch reads PEPPPPSPSPS. N-linked (GlcNAc...) asparagine glycans are attached at residues Asn-164, Asn-199, Asn-246, Asn-261, and Asn-279. Cys-169 and Cys-207 are disulfide-bonded. A disulfide bridge links Cys-277 with Cys-314. Residues 320 to 344 traverse the membrane as a helical segment; the sequence is ILLPLIIGLILLGLLALVLIAFCII. The Cytoplasmic segment spans residues 345-354; sequence RRRPSAYQAL.

Belongs to the LAMP family. In terms of processing, N- and O-glycosylated. In terms of tissue distribution, highly expressed by blood monocytes and tissue macrophages. Also expressed in lymphocytes, fibroblasts and endothelial cells. Expressed in many tumor cell lines which could allow them to attach to selectins on vascular endothelium, facilitating their dissemination to secondary sites.

It is found in the cell membrane. The protein resides in the endosome membrane. It localises to the lysosome membrane. Its function is as follows. Could play a role in phagocytic activities of tissue macrophages, both in intracellular lysosomal metabolism and extracellular cell-cell and cell-pathogen interactions. Binds to tissue- and organ-specific lectins or selectins, allowing homing of macrophage subsets to particular sites. Rapid recirculation of CD68 from endosomes and lysosomes to the plasma membrane may allow macrophages to crawl over selectin-bearing substrates or other cells. This Homo sapiens (Human) protein is Macrosialin (CD68).